A 403-amino-acid chain; its full sequence is Adenylate cyclase (403 aa).

Residues 1–16 (MSTEHTNTPRADSPQS) show a composition bias toward polar residues. Residues 1–37 (MSTEHTNTPRADSPQSAAEAVRGARQHAPAATPAESD) form a disordered region. The segment at 31–60 (ATPAESDPILELAEAMEGPLRIPAHTPEAV) is pyruvate binding. Residues 238 to 347 (AVGFADLVSY…PTVNMAARLT (110 aa)) enclose the Guanylate cyclase domain. Positions 243 and 287 each coordinate Mg(2+).

The protein belongs to the adenylyl cyclase class-3 family. In terms of assembly, homodimer. Mg(2+) is required as a cofactor.

It is found in the cytoplasm. The enzyme catalyses ATP = 3',5'-cyclic AMP + diphosphate. Its activity is regulated as follows. Pyruvate-stimulated. Functionally, plays essential roles in regulation of cellular metabolism by catalyzing the synthesis of a second messenger, cAMP. The protein is Adenylate cyclase (cya) of Glutamicibacter nicotianae (Arthrobacter nicotianae).